The primary structure comprises 258 residues: Probable parvulin-type peptidyl-prolyl cis-trans isomerase (258 aa).

A signal peptide spans 1–19 (MKRIAMLAAACVIAVPAFA). Residues 127-219 (KMEYKVRHIL…FGWHVIQVDD (93 aa)) enclose the PpiC domain.

Belongs to the PpiC/parvulin rotamase family.

It catalyses the reaction [protein]-peptidylproline (omega=180) = [protein]-peptidylproline (omega=0). This Bordetella parapertussis (strain 12822 / ATCC BAA-587 / NCTC 13253) protein is Probable parvulin-type peptidyl-prolyl cis-trans isomerase.